The sequence spans 921 residues: Alanine--tRNA ligase (921 aa).

Zn(2+) is bound by residues His-602, His-606, Cys-706, and His-710.

Belongs to the class-II aminoacyl-tRNA synthetase family. Zn(2+) is required as a cofactor.

Its subcellular location is the cytoplasm. The catalysed reaction is tRNA(Ala) + L-alanine + ATP = L-alanyl-tRNA(Ala) + AMP + diphosphate. In terms of biological role, catalyzes the attachment of alanine to tRNA(Ala) in a two-step reaction: alanine is first activated by ATP to form Ala-AMP and then transferred to the acceptor end of tRNA(Ala). Also edits incorrectly charged Ser-tRNA(Ala) and Gly-tRNA(Ala) via its editing domain. This is Alanine--tRNA ligase from Hyperthermus butylicus (strain DSM 5456 / JCM 9403 / PLM1-5).